Here is a 291-residue protein sequence, read N- to C-terminus: Bifunctional protein FolD (291 aa).

Residues 167 to 169 (GRS), serine 192, and isoleucine 233 each bind NADP(+).

It belongs to the tetrahydrofolate dehydrogenase/cyclohydrolase family. As to quaternary structure, homodimer.

It carries out the reaction (6R)-5,10-methylene-5,6,7,8-tetrahydrofolate + NADP(+) = (6R)-5,10-methenyltetrahydrofolate + NADPH. The enzyme catalyses (6R)-5,10-methenyltetrahydrofolate + H2O = (6R)-10-formyltetrahydrofolate + H(+). The protein operates within one-carbon metabolism; tetrahydrofolate interconversion. In terms of biological role, catalyzes the oxidation of 5,10-methylenetetrahydrofolate to 5,10-methenyltetrahydrofolate and then the hydrolysis of 5,10-methenyltetrahydrofolate to 10-formyltetrahydrofolate. In Dichelobacter nodosus (strain VCS1703A), this protein is Bifunctional protein FolD.